The following is a 620-amino-acid chain: 1-deoxy-D-xylulose-5-phosphate synthase (620 aa).

Thiamine diphosphate is bound by residues H80 and G121–S123. D152 is a Mg(2+) binding site. Residues G153 to A154, N181, Y288, and E370 contribute to the thiamine diphosphate site. N181 contributes to the Mg(2+) binding site.

The protein belongs to the transketolase family. DXPS subfamily. As to quaternary structure, homodimer. It depends on Mg(2+) as a cofactor. Thiamine diphosphate serves as cofactor.

The catalysed reaction is D-glyceraldehyde 3-phosphate + pyruvate + H(+) = 1-deoxy-D-xylulose 5-phosphate + CO2. The protein operates within metabolic intermediate biosynthesis; 1-deoxy-D-xylulose 5-phosphate biosynthesis; 1-deoxy-D-xylulose 5-phosphate from D-glyceraldehyde 3-phosphate and pyruvate: step 1/1. Its function is as follows. Catalyzes the acyloin condensation reaction between C atoms 2 and 3 of pyruvate and glyceraldehyde 3-phosphate to yield 1-deoxy-D-xylulose-5-phosphate (DXP). The polypeptide is 1-deoxy-D-xylulose-5-phosphate synthase (Salmonella choleraesuis (strain SC-B67)).